The primary structure comprises 207 residues: Superoxide dismutase [Mn] (207 aa).

4 residues coordinate Mn(2+): His-28, His-76, Asp-160, and His-164.

This sequence belongs to the iron/manganese superoxide dismutase family. As to quaternary structure, homotetramer. Requires Mn(2+) as cofactor.

Its subcellular location is the secreted. It carries out the reaction 2 superoxide + 2 H(+) = H2O2 + O2. In terms of biological role, destroys superoxide anion radicals which are normally produced within the cells and which are toxic to biological systems. This Mycolicibacterium smegmatis (Mycobacterium smegmatis) protein is Superoxide dismutase [Mn] (sodA).